We begin with the raw amino-acid sequence, 164 residues long: Transcriptional repressor NrdR (164 aa).

A zinc finger lies at 3–34; it reads CPKCNYHKSSVVDSRQAEDGNTIRRRRECEQC. An ATP-cone domain is found at 49–139; that stretch reads LLVIKKDGTR…VYKSFKDVDE (91 aa).

It belongs to the NrdR family. Requires Zn(2+) as cofactor.

Functionally, negatively regulates transcription of bacterial ribonucleotide reductase nrd genes and operons by binding to NrdR-boxes. The sequence is that of Transcriptional repressor NrdR from Streptococcus pyogenes serotype M5 (strain Manfredo).